The following is a 326-amino-acid chain: Fructokinase (326 aa).

The segment at E275–P326 is disordered. A compositionally biased stretch (basic residues) spans Q287–Q299. Basic and acidic residues predominate over residues W307 to P326.

This sequence belongs to the carbohydrate kinase PfkB family.

It catalyses the reaction D-fructose + ATP = D-fructose 6-phosphate + ADP + H(+). The chain is Fructokinase (frk) from Rhizobium leguminosarum bv. trifolii.